We begin with the raw amino-acid sequence, 570 residues long: CDKN2A-interacting protein (570 aa).

Residue Ala2 is modified to N-acetylalanine. The XRN2-binding (XTBD) domain occupies 19–126 (VETLRCEGET…KVKKRGISSS (108 aa)). Residues 122–345 (GISSSNEGVE…TSLLMPKSSS (224 aa)) are disordered. Ser124 is subject to Phosphoserine. Positions 147–162 (VERDHGKKSAKTDRSA) are enriched in basic and acidic residues. The span at 167 to 183 (SSGSKGSSTKSESSGTS) shows a compositional bias: low complexity. Lys176 is covalently cross-linked (Glycyl lysine isopeptide (Lys-Gly) (interchain with G-Cter in SUMO1)). A compositionally biased stretch (polar residues) spans 184-198 (ARSNSGVSHQNSSTS). Over residues 203-221 (SVCSQSSSNSSQVTSAGSG) the composition is skewed to low complexity. Residues 224-233 (SEPEAPDKHG) are compositionally biased toward basic and acidic residues. A Phosphoserine modification is found at Ser234. Low complexity-rich tracts occupy residues 234-248 (SASF…SLNS) and 271-301 (SSVS…PLLS). The segment covering 302–317 (CKSSSETASSGLTTKA) has biased composition (polar residues). Low complexity predominate over residues 318–345 (SSEANISSSVSKNSSSSGTSLLMPKSSS). Phosphoserine is present on Ser378. Positions 383–407 (SQLASKSSSQSSTSQLPSKSTSQSS) are disordered. The DRBM domain maps to 452–527 (NHGELLNAAI…SREALKLFLK (76 aa)).

The protein belongs to the CARF family. Interacts with CDKN2A/p14ARF, p53/TP53 and MDM2. Interacts with CHEK2 and MAPK3. Interacts with XRN2. Post-translationally, may be ubiquitinated.

It localises to the nucleus. The protein resides in the nucleoplasm. Regulates DNA damage response and cell proliferation in a dose-dependent manner through a number of signaling pathways involved in cell proliferation, apoptosis and senescence. This chain is CDKN2A-interacting protein (Cdkn2aip), found in Rattus norvegicus (Rat).